We begin with the raw amino-acid sequence, 240 residues long: 1-(5-phosphoribosyl)-5-[(5-phosphoribosylamino)methylideneamino] imidazole-4-carboxamide isomerase (240 aa).

Residue D8 is the Proton acceptor of the active site. The active-site Proton donor is D129.

Belongs to the HisA/HisF family.

It localises to the cytoplasm. It catalyses the reaction 1-(5-phospho-beta-D-ribosyl)-5-[(5-phospho-beta-D-ribosylamino)methylideneamino]imidazole-4-carboxamide = 5-[(5-phospho-1-deoxy-D-ribulos-1-ylimino)methylamino]-1-(5-phospho-beta-D-ribosyl)imidazole-4-carboxamide. It functions in the pathway amino-acid biosynthesis; L-histidine biosynthesis; L-histidine from 5-phospho-alpha-D-ribose 1-diphosphate: step 4/9. This Clostridium beijerinckii (strain ATCC 51743 / NCIMB 8052) (Clostridium acetobutylicum) protein is 1-(5-phosphoribosyl)-5-[(5-phosphoribosylamino)methylideneamino] imidazole-4-carboxamide isomerase.